Consider the following 342-residue polypeptide: Methyltransferase ungE' (342 aa).

This sequence belongs to the methyltransferase superfamily.

It functions in the pathway secondary metabolite biosynthesis. In terms of biological role, methyltransferase; part of the gene cluster that mediates the biosynthesis of the unguisins, gamma-aminobutyric acid (GABA)-containing fungal cyclic heptapeptides with the amino acid sequence cyclo-(D-Ala1-D-Val2-L-Leu3-beta-MePhe4-D-Ala5-D-Trp6-GABA7) for unguisin H and cyclo-(D-Ala1-D-Ala2-L-Leu3-beta-MePhe4-D-Ala5-D-Trp6-GABA7) for unguisin I. Within the pathway, the methyltransferase ungE' is probably involved in the synthesis of the (2R,3R)-beta-methylphenylalanine residue incorporated by the module 4 of the nonribosomal peptide synthetase (NRPS) ungA'. The alanine racemase ungC' catalyzes the interconversion of L-alanine and D-alanine, providing the D-alanine which is accepted by the first adenylation domain of ungA'. UngA' is the main enzyme within the cluster which condenses the 7 residues using its respective 7 modules. The terminal condensation domain (Ct) is involved in cyclization with D-alanine and thereby releasing of unguisins H and I. Finally, the hydrolase ungD' catalyzes the hydrolysis between the D-tryptophan and GABA residues of unguisins H and I to produce the corresponding linear peptides. The chain is Methyltransferase ungE' from Aspergillus campestris (strain IBT 28561).